Consider the following 439-residue polypeptide: Argininosuccinate lyase (439 aa).

The protein belongs to the lyase 1 family. Argininosuccinate lyase subfamily.

The protein localises to the cytoplasm. It catalyses the reaction 2-(N(omega)-L-arginino)succinate = fumarate + L-arginine. It functions in the pathway amino-acid biosynthesis; L-arginine biosynthesis; L-arginine from L-ornithine and carbamoyl phosphate: step 3/3. This chain is Argininosuccinate lyase, found in Caldanaerobacter subterraneus subsp. tengcongensis (strain DSM 15242 / JCM 11007 / NBRC 100824 / MB4) (Thermoanaerobacter tengcongensis).